The following is a 239-amino-acid chain: tRNA (guanine-N(1)-)-methyltransferase (239 aa).

Residues G113 and 133-138 (IGDYVL) each bind S-adenosyl-L-methionine. Positions 218-239 (ERRPDLWAARATQNPPERKTNG) are disordered.

This sequence belongs to the RNA methyltransferase TrmD family. In terms of assembly, homodimer.

The protein localises to the cytoplasm. It catalyses the reaction guanosine(37) in tRNA + S-adenosyl-L-methionine = N(1)-methylguanosine(37) in tRNA + S-adenosyl-L-homocysteine + H(+). Specifically methylates guanosine-37 in various tRNAs. The protein is tRNA (guanine-N(1)-)-methyltransferase of Nitrobacter winogradskyi (strain ATCC 25391 / DSM 10237 / CIP 104748 / NCIMB 11846 / Nb-255).